A 152-amino-acid polypeptide reads, in one-letter code: UPF0266 membrane protein YobD (152 aa).

3 helical membrane passes run 6–26, 45–65, and 67–87; these read LVLILFIAALLAYALYDQFIM, VDSVIFVGLVAILIYNNVTSH, and AQMTTWLLSALALMGFYIFWI.

The protein belongs to the UPF0266 family.

Its subcellular location is the cell inner membrane. The protein is UPF0266 membrane protein YobD of Salmonella dublin (strain CT_02021853).